A 153-amino-acid polypeptide reads, in one-letter code: 6,7-dimethyl-8-ribityllumazine synthase (153 aa).

5-amino-6-(D-ribitylamino)uracil contacts are provided by residues phenylalanine 22, 56 to 58, and 80 to 82; these read AFE and AVI. 85–86 is a (2S)-2-hydroxy-3-oxobutyl phosphate binding site; sequence ST. The active-site Proton donor is the histidine 88. Residue phenylalanine 113 participates in 5-amino-6-(D-ribitylamino)uracil binding. Arginine 127 lines the (2S)-2-hydroxy-3-oxobutyl phosphate pocket.

Belongs to the DMRL synthase family.

The enzyme catalyses (2S)-2-hydroxy-3-oxobutyl phosphate + 5-amino-6-(D-ribitylamino)uracil = 6,7-dimethyl-8-(1-D-ribityl)lumazine + phosphate + 2 H2O + H(+). It functions in the pathway cofactor biosynthesis; riboflavin biosynthesis; riboflavin from 2-hydroxy-3-oxobutyl phosphate and 5-amino-6-(D-ribitylamino)uracil: step 1/2. Its function is as follows. Catalyzes the formation of 6,7-dimethyl-8-ribityllumazine by condensation of 5-amino-6-(D-ribitylamino)uracil with 3,4-dihydroxy-2-butanone 4-phosphate. This is the penultimate step in the biosynthesis of riboflavin. This chain is 6,7-dimethyl-8-ribityllumazine synthase, found in Fusobacterium nucleatum subsp. nucleatum (strain ATCC 25586 / DSM 15643 / BCRC 10681 / CIP 101130 / JCM 8532 / KCTC 2640 / LMG 13131 / VPI 4355).